The sequence spans 281 residues: Putative E3 ubiquitin-protein ligase SINA-like 6 (281 aa).

The segment at 1-26 (MVGVLLSERNGSQKRHCSSISSDDGR) is disordered. Residues 45 to 81 (CPICYQALKIPVFQCGNGHLACSSCCPKLRNKCPACA) form an RING-type zinc finger. Residues 95–280 (VLESVLVPCR…MMLCINELKQ (186 aa)) are SBD. An SIAH-type zinc finger spans residues 98–156 (SVLVPCRYADLGCTKTIYYGRESTHEKICNFSPCSCPVQGCNYTGSYKDLYEHYDLTHS). 8 residues coordinate Zn(2+): Cys-103, Cys-110, His-122, Cys-126, Cys-133, Cys-138, His-150, and His-155.

The protein belongs to the SINA (Seven in absentia) family.

The catalysed reaction is S-ubiquitinyl-[E2 ubiquitin-conjugating enzyme]-L-cysteine + [acceptor protein]-L-lysine = [E2 ubiquitin-conjugating enzyme]-L-cysteine + N(6)-ubiquitinyl-[acceptor protein]-L-lysine.. The protein operates within protein modification; protein ubiquitination. Its function is as follows. E3 ubiquitin-protein ligase that mediates ubiquitination and subsequent proteasomal degradation of target proteins. E3 ubiquitin ligases accept ubiquitin from an E2 ubiquitin-conjugating enzyme in the form of a thioester and then directly transfers the ubiquitin to targeted substrates. It probably triggers the ubiquitin-mediated degradation of different substrates. The protein is Putative E3 ubiquitin-protein ligase SINA-like 6 of Arabidopsis thaliana (Mouse-ear cress).